The chain runs to 65 residues: Small, acid-soluble spore protein 2 (65 aa).

Belongs to the alpha/beta-type SASP family.

In terms of biological role, SASP are bound to spore DNA. They are double-stranded DNA-binding proteins that cause DNA to change to an a-like conformation. They protect the DNA backbone from chemical and enzymatic cleavage and are thus involved in dormant spore's high resistance to UV light. In Bacillus cereus, this protein is Small, acid-soluble spore protein 2 (sasP-2).